The sequence spans 2614 residues: Talin-B (2614 aa).

The region spanning 85-369 (RPLKVRLMDE…GYIEILMKKR (285 aa)) is the FERM domain. Positions 393 to 421 (RGQTSQATTSSSLSGYDGNGGREGQYSAP) are disordered. The segment covering 395–406 (QTSQATTSSSLS) has biased composition (low complexity). Coiled-coil stretches lie at residues 1938–1965 (TQNI…ASGK) and 2033–2057 (NKAI…LVQS). The 242-residue stretch at 2219–2460 (LLFAAGESLE…SIRKKEYSDQ (242 aa)) folds into the I/LWEQ domain. Positions 2454–2557 (KKEYSDQTGN…AAPTAAAPNK (104 aa)) are disordered. The span at 2473–2487 (KPTTSISVGITPTKR) shows a compositional bias: polar residues. Over residues 2517 to 2537 (KKPAPSQAPSSPVAPVSAPVS) the composition is skewed to low complexity. A compositionally biased stretch (pro residues) spans 2538–2548 (KPSPKPAPKPA). The HP domain maps to 2553–2614 (AAPNKTYTLE…NNIKTKLGLF (62 aa)).

Its subcellular location is the cytoplasm. The protein localises to the cytoskeleton. It localises to the cell cortex. Functionally, actin-binding protein required for multicellular morphogenesis. Substrate of pkgB and/or pkbA. The sequence is that of Talin-B (talB) from Dictyostelium discoideum (Social amoeba).